The following is a 222-amino-acid chain: Superoxide dismutase [Mn], mitochondrial (222 aa).

A mitochondrion-targeting transit peptide spans methionine 1 to glutamine 24. A Mn(2+)-binding site is contributed by histidine 50. 3'-nitrotyrosine is present on tyrosine 58. Lysine 68 and lysine 75 each carry N6-acetyllysine; alternate. Lysine 68 and lysine 75 each carry N6-succinyllysine; alternate. Histidine 98 serves as a coordination point for Mn(2+). N6-acetyllysine; alternate is present on residues lysine 122 and lysine 130. Lysine 122 and lysine 130 each carry N6-succinyllysine; alternate. Residues aspartate 183 and histidine 187 each coordinate Mn(2+). The residue at position 202 (lysine 202) is an N6-acetyllysine.

Belongs to the iron/manganese superoxide dismutase family. In terms of assembly, homotetramer. It depends on Mn(2+) as a cofactor. Post-translationally, nitrated under oxidative stress. Nitration coupled with oxidation inhibits the catalytic activity. In terms of processing, acetylation at Lys-122 decreases enzymatic activity. Deacetylated by SIRT3 upon exposure to ionizing radiations or after long fasting. Polyubiquitinated; leading to proteasomal degradation. Deubiquitinated by USP36 which increases protein stability.

The protein resides in the mitochondrion matrix. The enzyme catalyses 2 superoxide + 2 H(+) = H2O2 + O2. Its function is as follows. Destroys superoxide anion radicals which are normally produced within the cells and which are toxic to biological systems. The sequence is that of Superoxide dismutase [Mn], mitochondrial (SOD2) from Bos taurus (Bovine).